The chain runs to 137 residues: Oleosin Ara h 11.0102 (137 aa).

The residue at position 2 (Ala-2) is an N-acetylalanine; alternate. 2 helical membrane passes run 27 to 47 (AVVAGGSLLILAGLVLAATVI) and 55 to 75 (LFVIFSPVLVPAVITVALLGL).

Belongs to the oleosin family. As to expression, expressed in seeds (at protein level).

It is found in the lipid droplet. The protein resides in the membrane. Functionally, may have a structural role to stabilize the lipid body during desiccation of the seed by preventing coalescence of the oil. Probably interacts with both lipid and phospholipid moieties of lipid bodies. May also provide recognition signals for specific lipase anchorage in lipolysis during seedling growth. The polypeptide is Oleosin Ara h 11.0102 (Arachis hypogaea (Peanut)).